The following is a 724-amino-acid chain: MRFFVSCAKGLEYLLVDEVLALGAVGATATVAGVNVEGGLCDAQRLVLWSRLASRVLWPLAAFACADEDALYAGVAALPWVEHVLPGQTLAVDAHVSGEAITHARYAAQRVKDAVVDTLRDAGVVRPSVDVEHPDVRLNLSLRKGRATLSVDLGGRALHHRGWRQAPHAASLKEHLAAAVLLRAGWAKVYAEGGGLLDPMCGSGTLLIEGALMVADVAPGLSRYADPDAISHVSVAERPVLLPSRWRGFDVVAWEALVVDAQQRARRGLAELRPVLHGSDIDPRALGAAFANARAAGVQDAIEFVVAGIDVLPAVFEPHGVVVCNAPYDVRLAANPGLYRHLGDALRRVVPRWRAALVCGSSPLAFATGLRAGKKYQFFNGALECVLIVCDPVVPLAREAGGAQALSEGAQMVANRLRKNVQRLKKWRMRAGVECYRVYDADLPEYAAAIDVYQEVDGARRLFLHVQEYAAPASIPEGDVRRRRHELLAAVRAVFDVSVAQVALKTRQRGKGGSQYGCFAQRGEFFHVCEHGALLRVNLFDYLDTGLFLDHRPLRARMAREAVGKRFLNVFCYTGVASVEAAVAGAAATTSVDLSSTYLHWCTDNFALNGQGGVRHRLVQADALAWLEAERGQYDVIFCDPPTFSNSARADDFDVQRDHVRLLRAAVARLTPGGVLYFSNNFRRFRLDVDAVAAFAQCEEISPVTIDLDFSRNTRIHRTWLLWR.

The THUMP domain occupies 42 to 153 (DAQRLVLWSR…KGRATLSVDL (112 aa)).

This sequence belongs to the methyltransferase superfamily. RlmKL family.

Its subcellular location is the cytoplasm. It carries out the reaction guanosine(2445) in 23S rRNA + S-adenosyl-L-methionine = N(2)-methylguanosine(2445) in 23S rRNA + S-adenosyl-L-homocysteine + H(+). It catalyses the reaction guanosine(2069) in 23S rRNA + S-adenosyl-L-methionine = N(2)-methylguanosine(2069) in 23S rRNA + S-adenosyl-L-homocysteine + H(+). Its function is as follows. Specifically methylates the guanine in position 2445 (m2G2445) and the guanine in position 2069 (m7G2069) of 23S rRNA. This chain is Ribosomal RNA large subunit methyltransferase K/L, found in Xylella fastidiosa (strain 9a5c).